Here is a 416-residue protein sequence, read N- to C-terminus: Phosphoglycerate kinase (416 aa).

Residue S2 is modified to N-acetylserine. The (2R)-3-phosphoglycerate site is built by V23, D24, F25, N26, Q38, R39, S62, H63, G65, and R66. K82 participates in a covalent cross-link: Glycyl lysine isopeptide (Lys-Gly) (interchain with G-Cter in ubiquitin). T93 bears the Phosphothreonine mark. S110 is subject to Phosphoserine. (2R)-3-phosphoglycerate contacts are provided by L121 and R122. A phosphoserine mark is found at S130 and S154. H168 and R169 together coordinate (2R)-3-phosphoglycerate. At S172 the chain carries Phosphoserine. Residue K197 forms a Glycyl lysine isopeptide (Lys-Gly) (interchain with G-Cter in ubiquitin) linkage. The residue at position 203 (T203) is a Phosphothreonine. G212 provides a ligand contact to ADP. G212 contributes to the CDP binding site. 2 residues coordinate AMP: A213 and K214. Positions 213 and 214 each coordinate ATP. A213 is a Mg(2+) binding site. A216 and D217 together coordinate Mg(2+). Position 217 (D217) interacts with CDP. K218 provides a ligand contact to AMP. K218 lines the ATP pocket. G236 is an ADP binding site. Position 236 (G236) interacts with CDP. G237 is a binding site for AMP. G237 contributes to the ATP binding site. T241 is modified (phosphothreonine). Glycyl lysine isopeptide (Lys-Gly) (interchain with G-Cter in ubiquitin) cross-links involve residues K258 and K274. A Phosphothreonine modification is found at T298. K302 participates in a covalent cross-link: Glycyl lysine isopeptide (Lys-Gly) (interchain with G-Cter in ubiquitin). G311 contacts AMP. The ATP site is built by G311 and L312. S318 is subject to Phosphoserine. T331 is subject to Phosphothreonine. An ATP-binding site is contributed by N335. CDP is bound by residues G336 and F341. F341 contributes to the ADP binding site. An AMP-binding site is contributed by E342. E342 lines the ATP pocket. G371 contacts (2R)-3-phosphoglycerate. Residues D373 and T374 each contribute to the ATP site. D373 serves as a coordination point for Mg(2+). T392 is modified (phosphothreonine). G394 and G395 together coordinate (2R)-3-phosphoglycerate.

Belongs to the phosphoglycerate kinase family. As to quaternary structure, monomer. It depends on Mg(2+) as a cofactor.

It is found in the cytoplasm. It localises to the mitochondrion. The catalysed reaction is (2R)-3-phosphoglycerate + ATP = (2R)-3-phospho-glyceroyl phosphate + ADP. The protein operates within carbohydrate degradation; glycolysis; pyruvate from D-glyceraldehyde 3-phosphate: step 2/5. Functionally, catalyzes one of the two ATP producing reactions in the glycolytic pathway via the reversible conversion of 1,3-diphosphoglycerate to 3-phosphoglycerate. Both L- and D- forms of purine and pyrimidine nucleotides can be used as substrates, but the activity is much lower on pyrimidines. Negatively regulates the biosynthesis of acetyl-CoA from pyruvate in the mitochondrion. In Saccharomyces cerevisiae (strain ATCC 204508 / S288c) (Baker's yeast), this protein is Phosphoglycerate kinase (PGK1).